The primary structure comprises 374 residues: Queuine tRNA-ribosyltransferase (374 aa).

The Proton acceptor role is filled by aspartate 90. Substrate-binding positions include 90–94 (DSGGF), aspartate 144, glutamine 193, and glycine 220. The tract at residues 251–257 (GVGTPED) is RNA binding. Residue aspartate 270 is the Nucleophile of the active site. Residues 275 to 279 (TRNAR) form an RNA binding; important for wobble base 34 recognition region. The Zn(2+) site is built by cysteine 308, cysteine 310, cysteine 313, and histidine 339.

It belongs to the queuine tRNA-ribosyltransferase family. In terms of assembly, homodimer. Within each dimer, one monomer is responsible for RNA recognition and catalysis, while the other monomer binds to the replacement base PreQ1. It depends on Zn(2+) as a cofactor.

The catalysed reaction is 7-aminomethyl-7-carbaguanine + guanosine(34) in tRNA = 7-aminomethyl-7-carbaguanosine(34) in tRNA + guanine. Its pathway is tRNA modification; tRNA-queuosine biosynthesis. Functionally, catalyzes the base-exchange of a guanine (G) residue with the queuine precursor 7-aminomethyl-7-deazaguanine (PreQ1) at position 34 (anticodon wobble position) in tRNAs with GU(N) anticodons (tRNA-Asp, -Asn, -His and -Tyr). Catalysis occurs through a double-displacement mechanism. The nucleophile active site attacks the C1' of nucleotide 34 to detach the guanine base from the RNA, forming a covalent enzyme-RNA intermediate. The proton acceptor active site deprotonates the incoming PreQ1, allowing a nucleophilic attack on the C1' of the ribose to form the product. After dissociation, two additional enzymatic reactions on the tRNA convert PreQ1 to queuine (Q), resulting in the hypermodified nucleoside queuosine (7-(((4,5-cis-dihydroxy-2-cyclopenten-1-yl)amino)methyl)-7-deazaguanosine). This chain is Queuine tRNA-ribosyltransferase, found in Campylobacter fetus subsp. fetus (strain 82-40).